The primary structure comprises 167 residues: Phosphopantetheine adenylyltransferase (167 aa).

Thr-9 is a substrate binding site. Residues Thr-9–Phe-10 and His-17 contribute to the ATP site. Substrate contacts are provided by Lys-41, Leu-73, and Arg-87. Residues Gly-88 to Arg-90, Glu-98, and Tyr-123 to Thr-129 each bind ATP.

Belongs to the bacterial CoaD family. Homohexamer. Mg(2+) serves as cofactor.

It is found in the cytoplasm. It carries out the reaction (R)-4'-phosphopantetheine + ATP + H(+) = 3'-dephospho-CoA + diphosphate. The protein operates within cofactor biosynthesis; coenzyme A biosynthesis; CoA from (R)-pantothenate: step 4/5. Reversibly transfers an adenylyl group from ATP to 4'-phosphopantetheine, yielding dephospho-CoA (dPCoA) and pyrophosphate. The polypeptide is Phosphopantetheine adenylyltransferase (Bordetella avium (strain 197N)).